Here is a 462-residue protein sequence, read N- to C-terminus: Neuronal acetylcholine receptor subunit non-alpha-2 (462 aa).

An N-terminal signal peptide occupies residues methionine 1–arginine 30. Topologically, residues glutamate 31 to leucine 234 are extracellular. N-linked (GlcNAc...) asparagine glycosylation is found at asparagine 53 and asparagine 168. Cysteine 155 and cysteine 169 are oxidised to a cystine. Transmembrane regions (helical) follow at residues proline 235 to leucine 259, valine 267 to isoleucine 284, and tyrosine 301 to valine 322. At histidine 323–arginine 428 the chain is on the cytoplasmic side. Residues glutamate 362–proline 372 show a composition bias toward basic and acidic residues. A disordered region spans residues glutamate 362–glutamate 384. A helical membrane pass occupies residues isoleucine 429–phenylalanine 446.

Belongs to the ligand-gated ion channel (TC 1.A.9) family. Acetylcholine receptor (TC 1.A.9.1) subfamily. Neuronal AChR seems to be composed of two different type of subunits: alpha and beta.

It localises to the postsynaptic cell membrane. Its subcellular location is the cell membrane. Functionally, after binding acetylcholine, the AChR responds by an extensive change in conformation that affects all subunits and leads to opening of an ion-conducting channel across the plasma membrane. This Carassius auratus (Goldfish) protein is Neuronal acetylcholine receptor subunit non-alpha-2.